A 190-amino-acid polypeptide reads, in one-letter code: Recombination protein RecR (190 aa).

A C4-type zinc finger spans residues 58 to 73; that stretch reads CTQCGGLSEDELCYIC. A Toprim domain is found at 81-167; sequence SSLCLVESAR…HFTKIAQGVP (87 aa).

It belongs to the RecR family.

Functionally, may play a role in DNA repair. It seems to be involved in an RecBC-independent recombinational process of DNA repair. It may act with RecF and RecO. The sequence is that of Recombination protein RecR from Nitratiruptor sp. (strain SB155-2).